A 559-amino-acid chain; its full sequence is Hepatocyte nuclear factor 1-beta (559 aa).

The tract at residues 1–31 (MVSKLTSLQQELLSALLSSGVTKEVLVQALE) is dimerization. An HNF-p1 domain is found at 1–32 (MVSKLTSLQQELLSALLSSGVTKEVLVQALEE). Phosphoserine occurs at positions 49, 52, 75, and 80. Positions 93-188 (KELQALNTEE…ILRQFNQTVQ (96 aa)) constitute a POU-specific atypical domain. A DNA-binding region (homeobox; HNF1-type) is located at residues 231-312 (MRRNRFKWGP…RRKEEEAFRQ (82 aa)). The span at 328–341 (NTLLSHSSPHHQPS) shows a compositional bias: low complexity. The interval 328-371 (NTLLSHSSPHHQPSTSPPNKLPGVRYNQQGNNEVTSSSTISHHG) is disordered. A compositionally biased stretch (polar residues) spans 353 to 371 (YNQQGNNEVTSSSTISHHG).

Belongs to the HNF1 homeobox family. In terms of assembly, binds DNA as a dimer. Can form homodimer or heterodimer with HNF1-alpha. Interacts (via HNF-p1 domain) with PCBD1; the interaction increases its transactivation activity.

The protein resides in the nucleus. In terms of biological role, transcription factor that binds to the inverted palindrome 5'-GTTAATNATTAAC-3'. Binds to the FPC element in the cAMP regulatory unit of the PLAU gene. Transcriptional activity is increased by coactivator PCBD1. This chain is Hepatocyte nuclear factor 1-beta (HNF1B), found in Sus scrofa (Pig).